A 479-amino-acid polypeptide reads, in one-letter code: Ribosomal RNA small subunit methyltransferase F (479 aa).

Residues 128 to 134 (ASAPGSK), Glu-152, Asp-179, and Asp-197 contribute to the S-adenosyl-L-methionine site. The active-site Nucleophile is the Cys-250.

The protein belongs to the class I-like SAM-binding methyltransferase superfamily. RsmB/NOP family.

It localises to the cytoplasm. The catalysed reaction is cytidine(1407) in 16S rRNA + S-adenosyl-L-methionine = 5-methylcytidine(1407) in 16S rRNA + S-adenosyl-L-homocysteine + H(+). Its function is as follows. Specifically methylates the cytosine at position 1407 (m5C1407) of 16S rRNA. This is Ribosomal RNA small subunit methyltransferase F from Shewanella halifaxensis (strain HAW-EB4).